The chain runs to 324 residues: Nidogen-1 (324 aa).

Residues 16–178 (PFLADLDTTD…GVWVFEIGSP (163 aa)) enclose the NIDO domain. Asparagine 97 is a glycosylation site (N-linked (GlcNAc...) asparagine). A sulfotyrosine mark is found at tyrosine 200 and tyrosine 205. Residues 219-259 (TQPFPSHSPRRGYPDPHNVPRTLAPSYEATERPHGIPTERT) form a disordered region. Basic and acidic residues predominate over residues 247-259 (ATERPHGIPTERT). The EGF-like domain occupies 295–324 (SQQTCANNRHQCSVHAECRDYATGFCCRCV). 2 disulfides stabilise this stretch: cysteine 299–cysteine 312 and cysteine 306–cysteine 321.

In terms of assembly, interacts with FBLN1. Interacts with LGALS3BP. Interacts with PLXDC1. Interacts with SVEP1. In terms of processing, N- and O-glycosylated.

It is found in the secreted. The protein resides in the extracellular space. The protein localises to the extracellular matrix. Its subcellular location is the basement membrane. Functionally, sulfated glycoprotein widely distributed in basement membranes and tightly associated with laminin. Also binds to collagen IV and perlecan. It probably has a role in cell-extracellular matrix interactions. This is Nidogen-1 (Nid1) from Rattus norvegicus (Rat).